A 953-amino-acid chain; its full sequence is Probable isoleucine--tRNA ligase, cytoplasmic (953 aa).

The 'HIGH' region signature appears at 45-55; sequence PFATGLPHYGH. Positions 634–638 match the 'KMSKS' region motif; the sequence is KMSKR. Lys637 provides a ligand contact to ATP.

This sequence belongs to the class-I aminoacyl-tRNA synthetase family.

The protein resides in the cytoplasm. It catalyses the reaction tRNA(Ile) + L-isoleucine + ATP = L-isoleucyl-tRNA(Ile) + AMP + diphosphate. This Enterocytozoon bieneusi (strain H348) (Microsporidian parasite) protein is Probable isoleucine--tRNA ligase, cytoplasmic.